We begin with the raw amino-acid sequence, 271 residues long: Imidazole glycerol phosphate synthase subunit HisF (271 aa).

Catalysis depends on residues Asp12 and Asp136.

This sequence belongs to the HisA/HisF family. Heterodimer of HisH and HisF.

The protein localises to the cytoplasm. It carries out the reaction 5-[(5-phospho-1-deoxy-D-ribulos-1-ylimino)methylamino]-1-(5-phospho-beta-D-ribosyl)imidazole-4-carboxamide + L-glutamine = D-erythro-1-(imidazol-4-yl)glycerol 3-phosphate + 5-amino-1-(5-phospho-beta-D-ribosyl)imidazole-4-carboxamide + L-glutamate + H(+). It functions in the pathway amino-acid biosynthesis; L-histidine biosynthesis; L-histidine from 5-phospho-alpha-D-ribose 1-diphosphate: step 5/9. Functionally, IGPS catalyzes the conversion of PRFAR and glutamine to IGP, AICAR and glutamate. The HisF subunit catalyzes the cyclization activity that produces IGP and AICAR from PRFAR using the ammonia provided by the HisH subunit. This is Imidazole glycerol phosphate synthase subunit HisF from Haloarcula marismortui (strain ATCC 43049 / DSM 3752 / JCM 8966 / VKM B-1809) (Halobacterium marismortui).